The primary structure comprises 191 residues: Potassium-transporting ATPase KdpC subunit (191 aa).

Residues 13–35 form a helical membrane-spanning segment; sequence VLFTGLCGLAYPLAITGVAQAVL. A disordered region spans residues 112-132; the sequence is SGPVPADAVTSSASGLDPDIS.

The protein belongs to the KdpC family. As to quaternary structure, the system is composed of three essential subunits: KdpA, KdpB and KdpC.

The protein resides in the cell inner membrane. Its function is as follows. Part of the high-affinity ATP-driven potassium transport (or Kdp) system, which catalyzes the hydrolysis of ATP coupled with the electrogenic transport of potassium into the cytoplasm. This subunit acts as a catalytic chaperone that increases the ATP-binding affinity of the ATP-hydrolyzing subunit KdpB by the formation of a transient KdpB/KdpC/ATP ternary complex. This is Potassium-transporting ATPase KdpC subunit from Allorhizobium ampelinum (strain ATCC BAA-846 / DSM 112012 / S4) (Agrobacterium vitis (strain S4)).